Reading from the N-terminus, the 588-residue chain is uncharacterized protein (588 aa).

Positions 1 to 19 (MRSTAYLTALLSFLGATHA) are cleaved as a signal peptide. N-linked (GlcNAc...) asparagine glycosylation is found at Asn-45 and Asn-104. The 186-residue stretch at 118–303 (GQGRIPLYSA…TSVTLRTFKD (186 aa)) folds into the FAD-binding PCMH-type domain. At His-156 the chain carries Pros-8alpha-FAD histidine. Residues Asn-179, Asn-312, Asn-320, Asn-351, Asn-370, and Asn-446 are each glycosylated (N-linked (GlcNAc...) asparagine).

The protein belongs to the oxygen-dependent FAD-linked oxidoreductase family. FAD is required as a cofactor.

It is found in the secreted. This is an uncharacterized protein from Arthroderma benhamiae (strain ATCC MYA-4681 / CBS 112371) (Trichophyton mentagrophytes).